A 147-amino-acid polypeptide reads, in one-letter code: 3-dehydroquinate dehydratase (147 aa).

Residue Tyr-23 is the Proton acceptor of the active site. Positions 74, 80, and 87 each coordinate substrate. Residue His-100 is the Proton donor of the active site. Substrate contacts are provided by residues 101 to 102 (IS) and Arg-111.

The protein belongs to the type-II 3-dehydroquinase family. As to quaternary structure, homododecamer.

The enzyme catalyses 3-dehydroquinate = 3-dehydroshikimate + H2O. The protein operates within metabolic intermediate biosynthesis; chorismate biosynthesis; chorismate from D-erythrose 4-phosphate and phosphoenolpyruvate: step 3/7. Functionally, catalyzes a trans-dehydration via an enolate intermediate. This is 3-dehydroquinate dehydratase from Prochlorococcus marinus (strain MIT 9301).